The following is a 156-amino-acid chain: Enhancer of split M1 protein (156 aa).

The signal sequence occupies residues Met-1–Gly-19. 2 Kazal-like domains span residues Ser-23–Ser-81 and Lys-96–Cys-156. Disulfide bonds link Cys-29–Cys-62, Cys-33–Cys-55, Cys-102–Cys-135, Cys-106–Cys-128, and Cys-114–Cys-156.

This Drosophila simulans (Fruit fly) protein is Enhancer of split M1 protein.